Here is a 601-residue protein sequence, read N- to C-terminus: Phosphomethylpyrimidine synthase (601 aa).

Disordered regions lie at residues 1 to 31 (MTNKDARTPASSQTGEALASPQGDQEAGKSI) and 100 to 141 (AGRP…RDGQ). Positions 100-112 (AGRPVRPEDDGIK) are enriched in basic and acidic residues. Substrate contacts are provided by residues Asn-208, Met-237, Tyr-266, His-302, 322–324 (SRG), 363–366 (DGLR), and Glu-402. Zn(2+) is bound at residue His-406. Residue Tyr-429 participates in substrate binding. His-470 contacts Zn(2+). 3 residues coordinate [4Fe-4S] cluster: Cys-550, Cys-553, and Cys-558.

This sequence belongs to the ThiC family. Requires [4Fe-4S] cluster as cofactor.

It carries out the reaction 5-amino-1-(5-phospho-beta-D-ribosyl)imidazole + S-adenosyl-L-methionine = 4-amino-2-methyl-5-(phosphooxymethyl)pyrimidine + CO + 5'-deoxyadenosine + formate + L-methionine + 3 H(+). It participates in cofactor biosynthesis; thiamine diphosphate biosynthesis. Catalyzes the synthesis of the hydroxymethylpyrimidine phosphate (HMP-P) moiety of thiamine from aminoimidazole ribotide (AIR) in a radical S-adenosyl-L-methionine (SAM)-dependent reaction. The protein is Phosphomethylpyrimidine synthase of Streptomyces avermitilis (strain ATCC 31267 / DSM 46492 / JCM 5070 / NBRC 14893 / NCIMB 12804 / NRRL 8165 / MA-4680).